A 21-amino-acid chain; its full sequence is 23S rRNA methylase leader peptide (21 aa).

Its function is as follows. Involved in erythromycin resistance. The sequence is that of 23S rRNA methylase leader peptide from Corynebacterium diphtheriae.